We begin with the raw amino-acid sequence, 81 residues long: uncharacterized protein (81 aa).

Residues 1–45 form the SpoVT-AbrB domain; sequence MRTTIDVAGRLVIPKRIRERLGLRGNDQVEITERDGRIEIEPAPT.

The protein to B.subtilis SpoVT.

This is an uncharacterized protein from Mycobacterium bovis (strain ATCC BAA-935 / AF2122/97).